We begin with the raw amino-acid sequence, 178 residues long: Large ribosomal subunit protein uL6 (178 aa).

It belongs to the universal ribosomal protein uL6 family. In terms of assembly, part of the 50S ribosomal subunit.

In terms of biological role, this protein binds to the 23S rRNA, and is important in its secondary structure. It is located near the subunit interface in the base of the L7/L12 stalk, and near the tRNA binding site of the peptidyltransferase center. The polypeptide is Large ribosomal subunit protein uL6 (Arthrobacter sp. (strain FB24)).